A 675-amino-acid polypeptide reads, in one-letter code: TOM1-like protein 9 (675 aa).

One can recognise a VHS domain in the interval 9-138 (ATSEMLIGPD…ELLRAGAVFP (130 aa)). 5 disordered regions span residues 144–181 (SAPV…EPEF), 270–322 (LPGT…QLAL), 371–524 (FSDN…YAQM), 542–561 (QNGV…GYQP), and 622–675 (RDQT…AGTM). Residues 180 to 268 (EFPTLSLSEI…VLTNYEAIAS (89 aa)) form the GAT domain. Composition is skewed to polar residues over residues 299–317 (GDSS…NGVL) and 372–435 (SDNT…GQGV). The span at 436–451 (SSPWSSQPAQQPVQPS) shows a compositional bias: low complexity. Polar residues-rich tracts occupy residues 470-481 (QDYSPSAESGSP) and 488-524 (PTQT…YAQM). The segment covering 646–661 (NKPEDKLFGDLVDISK) has biased composition (basic and acidic residues).

This sequence belongs to the TOM1 family. In terms of assembly, interacts with ELC/VPS23A and ELCL/VPS23B. As to expression, ubiquitously expressed.

The protein resides in the cytoplasm. It localises to the membrane. Functionally, might contribute to the loading of the ESCRT machinery. The sequence is that of TOM1-like protein 9 from Arabidopsis thaliana (Mouse-ear cress).